Consider the following 577-residue polypeptide: Nuclear receptor subfamily 4 group A member 1 (577 aa).

The nuclear receptor DNA-binding region spans 243–318 (EGRCAVCGDN…VGMVKEVVRT (76 aa)). NR C4-type zinc fingers lie at residues 246-266 (CAVC…CEGC) and 282-311 (CLAN…VVGM). Residues 247–333 (AVCGDNASCQ…RRGRLPSKPK (87 aa)) form a required for binding NBRE-containing DNA region. The 236-residue stretch at 339–574 (SPVDLINSLV…PIVDKIFMDT (236 aa)) folds into the NR LBD domain. The segment at 500–523 (PKKVEELQSQIINCLKEHIPSSMN) is may bind lipopolysaccharide. Residues 563 to 574 (PPPIVDKIFMDT) form an AF-2 region.

It belongs to the nuclear hormone receptor family. NR4 subfamily. It depends on Zn(2+) as a cofactor.

The protein localises to the nucleus. It is found in the cytoplasm. It localises to the cytosol. Orphan nuclear receptor. Binds the NGFI-B response element (NBRE) 5'-AAAAGGTCA-3'. Its function is as follows. In the cytosol, may detect bacterial lipopolysaccharide (LPS) and NBRE-containing mitochondrial DNA released during pyroptosis, and play a role in non-canonical inflammasome activation. The sequence is that of Nuclear receptor subfamily 4 group A member 1 (nr4a1) from Xenopus laevis (African clawed frog).